Consider the following 823-residue polypeptide: Putative ankyrin repeat domain-containing protein 20A2 (823 aa).

ANK repeat units follow at residues 66-95, 99-128, 132-161, 165-194, and 198-227; these read QHRT…QIDV, ENRT…NPNL, YGNT…HIEA, DNNT…SSHA, and LRRS…DVFA. Disordered stretches follow at residues 301 to 343 and 355 to 402; these read VPEK…EVED and VQTL…LSEN. Over residues 372–384 the composition is skewed to basic and acidic residues; it reads QERHERSEKKQPQ. 3 coiled-coil regions span residues 431–480, 565–724, and 776–805; these read KKLK…KQLE, EMIT…NNST, and LVLE…EKTE.

The sequence is that of Putative ankyrin repeat domain-containing protein 20A2 from Homo sapiens (Human).